Reading from the N-terminus, the 209-residue chain is MSKTPLSIVHPWHGPVLTRDDYESLCCYIEITPSDSVKFELDKETGLLKVDRPQKFSNFCPCLYGLLPKTYCGDLSGEYSGQQSNRDNIKGDGDPLDICVLTEKNITQGNILLQARPIGGIRILDSGEADDKIIAVLEDDLVYGAMEDISDCPGSVLDMIQHYFLTYKATPESLIQAKPAKIEIIGLYGKKEAQKVIRLAHEDYCNLFM.

Residues K38, R52, and Y64 each coordinate substrate. Mg(2+) contacts are provided by D92, D97, and D130. Y167 serves as a coordination point for substrate.

The protein belongs to the PPase family. As to quaternary structure, homohexamer. Mg(2+) serves as cofactor.

It localises to the cytoplasm. It catalyses the reaction diphosphate + H2O = 2 phosphate + H(+). In terms of biological role, catalyzes the hydrolysis of inorganic pyrophosphate (PPi) forming two phosphate ions. The protein is Inorganic pyrophosphatase of Chlamydia muridarum (strain MoPn / Nigg).